The sequence spans 361 residues: Putative agmatine deiminase (361 aa).

Cys-354 (amidino-cysteine intermediate) is an active-site residue.

Belongs to the agmatine deiminase family.

It carries out the reaction agmatine + H2O = N-carbamoylputrescine + NH4(+). This Streptococcus pneumoniae (strain P1031) protein is Putative agmatine deiminase.